We begin with the raw amino-acid sequence, 236 residues long: Leucyl/phenylalanyl-tRNA--protein transferase (236 aa).

This sequence belongs to the L/F-transferase family.

The protein resides in the cytoplasm. It carries out the reaction N-terminal L-lysyl-[protein] + L-leucyl-tRNA(Leu) = N-terminal L-leucyl-L-lysyl-[protein] + tRNA(Leu) + H(+). The catalysed reaction is N-terminal L-arginyl-[protein] + L-leucyl-tRNA(Leu) = N-terminal L-leucyl-L-arginyl-[protein] + tRNA(Leu) + H(+). The enzyme catalyses L-phenylalanyl-tRNA(Phe) + an N-terminal L-alpha-aminoacyl-[protein] = an N-terminal L-phenylalanyl-L-alpha-aminoacyl-[protein] + tRNA(Phe). Functions in the N-end rule pathway of protein degradation where it conjugates Leu, Phe and, less efficiently, Met from aminoacyl-tRNAs to the N-termini of proteins containing an N-terminal arginine or lysine. This Shewanella sediminis (strain HAW-EB3) protein is Leucyl/phenylalanyl-tRNA--protein transferase.